A 103-amino-acid chain; its full sequence is Small ribosomal subunit protein uS10 (103 aa).

It belongs to the universal ribosomal protein uS10 family. As to quaternary structure, part of the 30S ribosomal subunit.

Functionally, involved in the binding of tRNA to the ribosomes. The sequence is that of Small ribosomal subunit protein uS10 from Alcanivorax borkumensis (strain ATCC 700651 / DSM 11573 / NCIMB 13689 / SK2).